We begin with the raw amino-acid sequence, 292 residues long: Ribosomal protein L11 methyltransferase (292 aa).

The S-adenosyl-L-methionine site is built by Thr145, Gly166, Asp188, and Asn229.

It belongs to the methyltransferase superfamily. PrmA family.

Its subcellular location is the cytoplasm. The enzyme catalyses L-lysyl-[protein] + 3 S-adenosyl-L-methionine = N(6),N(6),N(6)-trimethyl-L-lysyl-[protein] + 3 S-adenosyl-L-homocysteine + 3 H(+). In terms of biological role, methylates ribosomal protein L11. This is Ribosomal protein L11 methyltransferase from Pseudoalteromonas atlantica (strain T6c / ATCC BAA-1087).